Here is a 143-residue protein sequence, read N- to C-terminus: AP-2 complex subunit sigma (143 aa).

It belongs to the adaptor complexes small subunit family. In terms of assembly, adaptor protein complex 2 (AP-2) is a heterotetramer composed of two large adaptins (alpha-type subunit APL3 and beta-type subunit APL1), a medium chain (mu-type subunit APM4) and a small adaptin (sigma-type subunit APS2).

It is found in the cell membrane. Its subcellular location is the membrane. The protein resides in the coated pit. Functionally, component of the adaptor complexes which link clathrin to receptors in coated vesicles. Clathrin-associated protein complexes are believed to interact with the cytoplasmic tails of membrane proteins, leading to their selection and concentration. In Gibberella zeae (strain ATCC MYA-4620 / CBS 123657 / FGSC 9075 / NRRL 31084 / PH-1) (Wheat head blight fungus), this protein is AP-2 complex subunit sigma (APS2).